Reading from the N-terminus, the 324-residue chain is Olfactory receptor 7G2 (324 aa).

Topologically, residues Met-1 to Pro-25 are extracellular. A glycan (N-linked (GlcNAc...) asparagine) is linked at Asn-5. Residues Val-26–Leu-46 traverse the membrane as a helical segment. Residues Leu-47–His-54 are Cytoplasmic-facing. The helical transmembrane segment at Leu-55–Thr-75 threads the bilayer. The Extracellular portion of the chain corresponds to Thr-76 to Thr-99. The N-linked (GlcNAc...) asparagine glycan is linked to Asn-89. Cys-97 and Cys-189 are disulfide-bonded. The chain crosses the membrane as a helical span at residues Gln-100–Tyr-120. The Cytoplasmic segment spans residues Asp-121–Arg-139. A helical transmembrane segment spans residues Leu-140–Ser-160. At Leu-161–Ile-197 the chain is on the extracellular side. The helical transmembrane segment at Leu-198–Ser-217 threads the bilayer. Residues Tyr-218–Ala-237 lie on the Cytoplasmic side of the membrane. Residues Val-238 to Val-258 form a helical membrane-spanning segment. Over Tyr-259–Thr-271 the chain is Extracellular. Residues Ala-272 to Leu-292 form a helical membrane-spanning segment. Topologically, residues Arg-293–Glu-324 are cytoplasmic.

This sequence belongs to the G-protein coupled receptor 1 family.

It is found in the cell membrane. Odorant receptor. This Homo sapiens (Human) protein is Olfactory receptor 7G2 (OR7G2).